Here is a 406-residue protein sequence, read N- to C-terminus: Tryptophan 2,3-dioxygenase (406 aa).

Residues 72–76 (FIVTH) and Arg-144 contribute to the substrate site. His-328 lines the heme pocket. Thr-342 lines the substrate pocket.

The protein belongs to the tryptophan 2,3-dioxygenase family. Homotetramer. Dimer of dimers. Requires heme as cofactor.

It carries out the reaction L-tryptophan + O2 = N-formyl-L-kynurenine. Its pathway is amino-acid degradation; L-tryptophan degradation via kynurenine pathway; L-kynurenine from L-tryptophan: step 1/2. Heme-dependent dioxygenase that catalyzes the oxidative cleavage of the L-tryptophan (L-Trp) pyrrole ring and converts L-tryptophan to N-formyl-L-kynurenine. Catalyzes the oxidative cleavage of the indole moiety. This Xenopus tropicalis (Western clawed frog) protein is Tryptophan 2,3-dioxygenase.